A 317-amino-acid chain; its full sequence is Sulfate adenylyltransferase subunit 2 (317 aa).

Disordered stretches follow at residues M1–D21 and R298–F317.

The protein belongs to the PAPS reductase family. CysD subfamily. In terms of assembly, heterodimer composed of CysD, the smaller subunit, and CysN.

It carries out the reaction sulfate + ATP + H(+) = adenosine 5'-phosphosulfate + diphosphate. The protein operates within sulfur metabolism; hydrogen sulfide biosynthesis; sulfite from sulfate: step 1/3. In terms of biological role, with CysN forms the ATP sulfurylase (ATPS) that catalyzes the adenylation of sulfate producing adenosine 5'-phosphosulfate (APS) and diphosphate, the first enzymatic step in sulfur assimilation pathway. APS synthesis involves the formation of a high-energy phosphoric-sulfuric acid anhydride bond driven by GTP hydrolysis by CysN coupled to ATP hydrolysis by CysD. The polypeptide is Sulfate adenylyltransferase subunit 2 (Rhizobium johnstonii (strain DSM 114642 / LMG 32736 / 3841) (Rhizobium leguminosarum bv. viciae)).